A 498-amino-acid polypeptide reads, in one-letter code: Calcium-dependent protein kinase 22 (498 aa).

Residue glycine 2 is the site of N-myristoyl glycine attachment. The region spanning 36-305 (YSFGDELGKG…AADVLEHPWM (270 aa)) is the Protein kinase domain. ATP contacts are provided by residues 42-50 (LGKGNFGTT) and lysine 65. The Proton acceptor role is filled by aspartate 164. A Phosphoserine modification is found at serine 204. The segment at 309-339 (APDKPIDNVVLSRMKQFRAMNKLKKLALKVI) is autoinhibitory domain. 4 EF-hand domains span residues 346–381 (EEIKGLKTMFENMDMDKSGSITYEELKMGLNRHGSK), 382–417 (LSETEVKQLMEAADVDGNGTIDYIEFISATMHRHRL), 418–453 (ERDEHLYKAFQYFDKDGSGHITKEEVEIAMKEHGMG), and 454–488 (DEANAKDLISEFDKNNDGKIDYEEFCTMMRNGILQ). Residues aspartate 359, aspartate 361, serine 363, serine 365, glutamate 370, aspartate 395, aspartate 397, asparagine 399, threonine 401, glutamate 406, aspartate 431, aspartate 433, serine 435, histidine 437, glutamate 442, aspartate 466, asparagine 468, aspartate 470, lysine 472, and glutamate 477 each coordinate Ca(2+).

Belongs to the protein kinase superfamily. Ser/Thr protein kinase family. CDPK subfamily.

Its subcellular location is the membrane. The enzyme catalyses L-seryl-[protein] + ATP = O-phospho-L-seryl-[protein] + ADP + H(+). It carries out the reaction L-threonyl-[protein] + ATP = O-phospho-L-threonyl-[protein] + ADP + H(+). With respect to regulation, activated by calcium. Autophosphorylation may play an important role in the regulation of the kinase activity. May play a role in signal transduction pathways that involve calcium as a second messenger. This Arabidopsis thaliana (Mouse-ear cress) protein is Calcium-dependent protein kinase 22 (CPK22).